The sequence spans 172 residues: Large ribosomal subunit protein uL10 (172 aa).

Belongs to the universal ribosomal protein uL10 family. In terms of assembly, part of the ribosomal stalk of the 50S ribosomal subunit. The N-terminus interacts with L11 and the large rRNA to form the base of the stalk. The C-terminus forms an elongated spine to which L12 dimers bind in a sequential fashion forming a multimeric L10(L12)X complex.

Functionally, forms part of the ribosomal stalk, playing a central role in the interaction of the ribosome with GTP-bound translation factors. The protein is Large ribosomal subunit protein uL10 of Rhizobium leguminosarum bv. trifolii (strain WSM2304).